A 395-amino-acid polypeptide reads, in one-letter code: Multidrug resistance protein MdtL (395 aa).

Helical transmembrane passes span 4–24 (FLLCSFALVLLYPAGIDMYLV), 42–62 (IAFSVYLAGMATAMLFAGKIA), 69–89 (PVAIVGALVFMTASLLCSRAS), 93–113 (LFLSGRFLQGVGAGGCYVVAF), 131–151 (LLNGITCIVPVLAPVMGHLIM), 158–178 (SLFYTMSAMGIIVGLLSLFIL), 217–237 (VSVILTFVNASPVLLMEVMGF), 247–267 (ALTAGVSMVVSFSTPFALGLF), 271–291 (TLMLVSQGLFLTAGVTLSLAH), 295–315 (VTLFGLTLICAGFSVGFGVAM), 328–350 (VASSTLGIAQVCGSSLWIWLAAI), and 355–377 (AMNMLIGILIGCSIVSILLIFSV).

It belongs to the major facilitator superfamily. DHA1 family. MdtL (TC 2.A.1.2.22) subfamily.

The protein localises to the cell inner membrane. The polypeptide is Multidrug resistance protein MdtL (Salmonella schwarzengrund (strain CVM19633)).